Consider the following 267-residue polypeptide: tRNA pseudouridine synthase A (267 aa).

Asp-51 functions as the Nucleophile in the catalytic mechanism. Tyr-109 contacts substrate.

The protein belongs to the tRNA pseudouridine synthase TruA family. In terms of assembly, homodimer.

The catalysed reaction is uridine(38/39/40) in tRNA = pseudouridine(38/39/40) in tRNA. Its function is as follows. Formation of pseudouridine at positions 38, 39 and 40 in the anticodon stem and loop of transfer RNAs. In Staphylococcus epidermidis (strain ATCC 12228 / FDA PCI 1200), this protein is tRNA pseudouridine synthase A.